Here is a 2360-residue protein sequence, read N- to C-terminus: Nucleoprotein TPR (2360 aa).

N-acetylalanine is present on alanine 2. Positions 3–13 are sufficient for interaction with TPR; that stretch reads AVLQQVLERPE. The necessary for interaction with HSF1 stretch occupies residues 14–117; that stretch reads LNKLPKSTQN…GIQSQFTRAK (104 aa). The stretch at 24–370 forms a coiled coil; it reads KLEKFLAEQQ…SATKRKGAIL (347 aa). 3 positions are modified to N6-acetyllysine: lysine 252, lysine 312, and lysine 345. Serine 379 carries the post-translational modification Phosphoserine. Residues 423-603 adopt a coiled-coil conformation; the sequence is LDEIVKEVEA…RESRQHQMQL (181 aa). Lysine 428, lysine 457, and lysine 477 each carry N6-acetyllysine. The necessary for association to the NPC stretch occupies residues 437–513; sequence LKRQREEYER…LMELEEARGN (77 aa). Phosphoserine is present on residues serine 522, serine 523, and serine 632. Residues 664–1172 are a coiled coil; that stretch reads ETIEAKAALK…IEKLSDKVVT (509 aa). Lysine 713, lysine 723, lysine 748, and lysine 755 each carry N6-acetyllysine. The segment covering 915–924 has biased composition (polar residues); the sequence is LASQSTQRTG. The segment at 915-939 is disordered; that stretch reads LASQSTQRTGKGQPGDRDDVDDLKS. Positions 928–939 are enriched in basic and acidic residues; it reads PGDRDDVDDLKS. 2 positions are modified to phosphoserine: serine 1180 and serine 1185. Coiled-coil stretches lie at residues 1215–1420 and 1472–1629; these read EVAQ…LDAK and VQEM…QRDE. The segment at 1218 to 1320 is necessary for interaction with HSF1; that stretch reads QVESLRYRQR…NAELSEKSGM (103 aa). Disordered regions lie at residues 1479-1520 and 1618-1673; these read KDNL…TAQL and EHQE…PTPV. 2 stretches are compositionally biased toward basic and acidic residues: residues 1503–1512 and 1618–1630; these read LSEKETEARS and EHQERHLEQRDEP. Residues 1632–1651 are compositionally biased toward polar residues; the sequence is EPTNKAPEQQRQITLKTTPA. Lysine 1689 carries the N6-acetyllysine modification. Residue threonine 1691 is modified to Phosphothreonine. The segment covering 1801–1826 has biased composition (polar residues); the sequence is QSSPVERPSTSTAVFGTVSATPSSSL. The interval 1801-2122 is disordered; the sequence is QSSPVERPST…TPGIGGMQQH (322 aa). The sufficient and essential for mediating its nuclear import stretch occupies residues 1811 to 1866; the sequence is STAVFGTVSATPSSSLPKRAREEEEDSTIEAGDQVSDDTVEMPLPKKLKTVTPVGT. The segment covering 1866 to 1880 has biased composition (acidic residues); that stretch reads TEEEVMAEESTDGEA. Polar residues predominate over residues 1881-1892; sequence ETQTYNQDSQDS. The residue at position 1892 (serine 1892) is a Phosphoserine. Positions 1923–1934 are enriched in low complexity; that stretch reads QSDQQTTSSQDG. Composition is skewed to acidic residues over residues 1945 to 1986 and 1996 to 2017; these read DSDD…EDSN and DGYEADDAEGGDGTDPGTETEE. Over residues 2023–2061 the composition is skewed to polar residues; it reads ESNQRAADSQNSGEGNTSAAESSFSQEVAREQQPTSASE. A phosphoserine mark is found at serine 2031, serine 2034, serine 2045, serine 2047, and serine 2070. Residues arginine 2103 and arginine 2108 each carry the omega-N-methylarginine modification. A phosphothreonine mark is found at threonine 2113 and threonine 2134. Position 2152 is a phosphoserine (serine 2152). Arginine 2160 bears the Omega-N-methylarginine mark. The span at 2224–2241 shows a compositional bias: polar residues; the sequence is ESTTSDASEHASQSVPMV. Residues 2224 to 2360 form a disordered region; sequence ESTTSDASEH…RGGINRGNIN (137 aa). Positions 2242 to 2254 are enriched in low complexity; sequence TTSTGTLSTTNET. Composition is skewed to acidic residues over residues 2256 to 2269 and 2282 to 2296; these read AGDDGDEVFVETES and SQQEEEPVQASDESD. Low complexity predominate over residues 2297 to 2317; the sequence is LPSTSQDPPSSSSVDTSSSQP. An asymmetric dimethylarginine mark is found at arginine 2340, arginine 2342, and arginine 2351. Gly residues predominate over residues 2349-2360; the sequence is GGRGGINRGNIN.

This sequence belongs to the TPR family. Homodimer. Part of the nuclear pore complex (NPC). Associates with the XPO1/CRM1-mediated nuclear export complex, the Importin alpha/Importin beta receptor and the dynein 1 complex. Interacts (via C-terminal domain) with the KPNB1; the interaction occurs in a RanGTP-dependent manner. Interacts (via C-terminal region and phosphorylated form) with MAPK1/ERK2 (via phosphorylated form); the interaction requires dimerization of MAPK1/ERK2 and increases following EGF stimulation. Interacts with MAPK3/ERK1; the interaction increases following EGF stimulation. Interacts (via coiled coil region) with NUP153; the interaction is direct. Interacts with HSF1; the interaction increases in a stress-responsive manner and stimulates export of stress-induced HSP70 mRNA. Interacts with huntingtin/HTT; the interaction is inhibited by aggregated huntingtin/HTT forms with expanded polyglutamine stretch. Interacts with MAD1L1 (via N-terminal region), MAD2L1, and TTK; the interactions occurs in a microtubule-independent manner. Interacts (via middle region) with DYNLL1. Interacts with DCTN1, dynein, NUP153 and tubulin. Interacts with IFI204 (via C-terminal region). Interacts with IFI203. Interacts with MTA1. Interacts with ZC3HC1; this interaction mediates ZC3HC1 nuclear envelopes (NE)-association but also required for proper positioning of a substantial amount of TPR at the nuclear basket (NB). In terms of processing, phosphorylated. Phosphorylation occurs on serine and threonine residues (comprised in the C-terminal region) by MAPK1/ERK2 and stabilizes the interaction between these two proteins.

The protein localises to the nucleus. The protein resides in the nucleus membrane. It is found in the nucleus envelope. Its subcellular location is the nuclear pore complex. It localises to the cytoplasm. The protein localises to the cytoskeleton. The protein resides in the spindle. It is found in the chromosome. Its subcellular location is the centromere. It localises to the kinetochore. Component of the nuclear pore complex (NPC), a complex required for the trafficking across the nuclear envelope. Functions as a scaffolding element in the nuclear phase of the NPC essential for normal nucleocytoplasmic transport of proteins and mRNAs, plays a role in the establishment of nuclear-peripheral chromatin compartmentalization in interphase, and in the mitotic spindle checkpoint signaling during mitosis. Involved in the quality control and retention of unspliced mRNAs in the nucleus; in association with NUP153, regulates the nuclear export of unspliced mRNA species bearing constitutive transport element (CTE) in a NXF1- and KHDRBS1-independent manner. Negatively regulates both the association of CTE-containing mRNA with large polyribosomes and translation initiation. Does not play any role in Rev response element (RRE)-mediated export of unspliced mRNAs. Implicated in nuclear export of mRNAs transcribed from heat shock gene promoters; associates both with chromatin in the HSP70 promoter and with mRNAs transcribed from this promoter under stress-induced conditions. Modulates the nucleocytoplasmic transport of activated MAPK1/ERK2 and huntingtin/HTT and may serve as a docking site for the XPO1/CRM1-mediated nuclear export complex. Also plays a role as a structural and functional element of the perinuclear chromatin distribution; involved in the formation and/or maintenance of NPC-associated perinuclear heterochromatin exclusion zones (HEZs). Finally, acts as a spatial regulator of the spindle-assembly checkpoint (SAC) response ensuring a timely and effective recruitment of spindle checkpoint proteins like MAD1L1 and MAD2L1 to unattached kinetochore during the metaphase-anaphase transition before chromosome congression. Its N-terminus is involved in activation of oncogenic kinases. Plays a role in the regulation of nuclear protein export. The polypeptide is Nucleoprotein TPR (Rattus norvegicus (Rat)).